Reading from the N-terminus, the 560-residue chain is Developmental and secondary metabolism regulator veA (560 aa).

Positions 35 to 241 (GRRLWYRMRV…AEQGCRVRIR (207 aa)) constitute a Velvet domain. Positions 49–54 (ERARAC) match the Nuclear localization signal motif. 3 disordered regions span residues 49–70 (ERARACGSGPKSSADRRPVDPP), 171–197 (KEDKDKDKERDVESQPPLTGLSPATGG), and 250–560 (DGKG…RLRY). Residues 171–183 (KEDKDKDKERDVE) show a composition bias toward basic and acidic residues. Over residues 336-355 (AAPPQPFAQPPSVPASPVYP) the composition is skewed to pro residues. The span at 395–405 (PRRESIHHDYR) shows a compositional bias: basic and acidic residues. Over residues 411–439 (QLPPLPPPPYYPPTPQQSHMPPPQPPQVL) the composition is skewed to pro residues. The segment covering 444-453 (IDSNSKSNNR) has biased composition (polar residues). The segment at 455-496 (PMPSPTALANSAPRPLASLAPLAPLMQSTSSSAGKGPVHPAT) is PEST. Residues 461 to 479 (ALANSAPRPLASLAPLAPL) show a composition bias toward low complexity. Basic and acidic residues-rich tracts occupy residues 508–535 (RAHDESFWSEPEHGRYQNGTRDKGRSED) and 546–560 (RRADGTEADGIRLRY).

The protein belongs to the velvet family. VeA subfamily. As to quaternary structure, component of the heterotrimeric velvet complex composed of laeA, veA and velB; VeA acting as a bridging protein between laeA and velB.

The protein resides in the nucleus. It localises to the cytoplasm. In terms of biological role, component of the velvet transcription factor complex that controls sexual/asexual developmental ratio in response to light, promoting sexual development in the darkness while stimulating asexual sporulation under illumination. The velvet complex acts as a global regulator for secondary metabolite gene expression. Positively regulates chaetoglobosin A biosynthesis by controlling the expression of core genes of the chaetoglobosin A biosynthetic gene cluster and other relevant regulators in a light-dependent manner. VeA directly regulates transcription factors brlA, laeA, and the chaetoglobosin A cluster-specific transcription regulator cheR. Also directly regulates the expression of one of the chaetoglobosin A cluster cytochrome P450 monooxygenases (cheE or cheG), but only indirectly regulates the expression of the PKS-NRPS hybrid cheA. Moreover, VeA has a significant effect on the asexual spores production, irrespective of light or dark condition. The protein is Developmental and secondary metabolism regulator veA of Chaetomium globosum (strain ATCC 6205 / CBS 148.51 / DSM 1962 / NBRC 6347 / NRRL 1970) (Soil fungus).